Here is a 423-residue protein sequence, read N- to C-terminus: ATP-dependent Clp protease ATP-binding subunit ClpX (423 aa).

In terms of domain architecture, ClpX-type ZB spans 1–50 (MTDDTEYRCSFCGKEHHQVDDLIAGPDVRICSECVVLSCEIVEDRRNEAL). Residues C9, C12, C31, and C34 each coordinate Zn(2+). 126-133 (PTGCGKTY) is an ATP binding site.

This sequence belongs to the ClpX chaperone family. As to quaternary structure, component of the ClpX-ClpP complex. Forms a hexameric ring that, in the presence of ATP, binds to fourteen ClpP subunits assembled into a disk-like structure with a central cavity, resembling the structure of eukaryotic proteasomes.

In terms of biological role, ATP-dependent specificity component of the Clp protease. It directs the protease to specific substrates. Can perform chaperone functions in the absence of ClpP. This Tropheryma whipplei (strain Twist) (Whipple's bacillus) protein is ATP-dependent Clp protease ATP-binding subunit ClpX.